Consider the following 485-residue polypeptide: Glutamate--tRNA ligase (485 aa).

A 'HIGH' region motif is present at residues 12-22; that stretch reads PSPTGEPHVGT. Residues 253-257 carry the 'KMSKS' region motif; the sequence is KLSKR. Lysine 256 serves as a coordination point for ATP.

Belongs to the class-I aminoacyl-tRNA synthetase family. Glutamate--tRNA ligase type 1 subfamily. In terms of assembly, monomer.

It is found in the cytoplasm. The enzyme catalyses tRNA(Glu) + L-glutamate + ATP = L-glutamyl-tRNA(Glu) + AMP + diphosphate. Catalyzes the attachment of glutamate to tRNA(Glu) in a two-step reaction: glutamate is first activated by ATP to form Glu-AMP and then transferred to the acceptor end of tRNA(Glu). The chain is Glutamate--tRNA ligase from Sinorhizobium medicae (strain WSM419) (Ensifer medicae).